The following is a 430-amino-acid chain: Sesquiterpene synthase Agr5 (430 aa).

An N-terminal signal peptide occupies residues 1–25 (MASSLLEPSLAAIALVILLASVSLS). An N-linked (GlcNAc...) asparagine glycan is attached at Asn-113. Positions 176, 311, 315, and 319 each coordinate Mg(2+). A DDXXD motif motif is present at residues 176–180 (DEYTD). Positions 401 and 402 each coordinate (2E,6E)-farnesyl diphosphate.

The protein belongs to the terpene synthase family. Mg(2+) serves as cofactor.

The enzyme catalyses (2E,6E)-farnesyl diphosphate = viridiflorene + diphosphate. Functionally, terpene cyclase that catalyzes the cyclization of farnesyl diphosphate (FPP) to viridiflorene and viridiflorol. This Cyclocybe aegerita (Black poplar mushroom) protein is Sesquiterpene synthase Agr5.